The following is a 572-amino-acid chain: MQGPLYIGFDLSTQQLKALVVNSDLKVVYVSKFDFDADSRGFPIKKGVITNEAEHEVYAPVALWLQALDGVLEGLKKQGLDFARVKGISGAGQQHGSVYWGQDAERLLKELDSGKSLEDQLSGAFSHPYSPNWQDSSTQKECDEFDAFLGGADKLANATGSKAHHRFTGPQILRFQRKYPEVYKKTSRISLVSSFLASLFLGHIAPLDISDACGMNLWNIKQGAYDEKLLQLCAGPSGVEDLKRKLGAVPEDGGINLGQIDRYYIERYGFSSDCTIIPATGDNPATILALPLRPSDAMVSLGTSTTFLMSTPNYMPDPATHFFNHPTTAGLYMFMLCYKNGGLAREHIRDAINDKLGMAGDKDPWANFDKITLETAPMGQKKDSDPMKMGLFFPRPEIVPNLRAGQWRFDYNPADGSLHETNGGWNKPADEARAIVESQFLSLRLRSRGLTASPGQGMPAQPRRVYLVGGGSKNKAIAKVAGEILGGSDGVYKLEIGDNACALGAAYKAVWALERKDGQTFEDLIGQRWREEDFIEKIADGYQKGVFEKYGAALEGFEKMELQVLKQEGETR.

Residues H95, R166, D282, and N283 each coordinate substrate. ATP-binding positions include W365, 470–471 (GG), and N474.

Belongs to the FGGY kinase family.

It localises to the cytoplasm. It catalyses the reaction D-xylulose + ATP = D-xylulose 5-phosphate + ADP + H(+). In terms of biological role, highly specific D-xylulose kinase which participates in the catabolism of xylose. Xylose is a major component of hemicelluloses such as xylan. Most fungi utilize D-xylose via three enzymatic reactions, xylose reductase (XR), xylitol dehydrogenase (XDH), and xylulokinase, to form xylulose 5-phosphate, which enters pentose phosphate pathway. This is Probable D-xylulose kinase A (xkiA) from Aspergillus flavus (strain ATCC 200026 / FGSC A1120 / IAM 13836 / NRRL 3357 / JCM 12722 / SRRC 167).